The following is a 321-amino-acid chain: NADPH-dependent codeinone reductase 1-5 (321 aa).

NADPH-binding residues include Thr27 and Asp51. Active-site proton donor residues include Tyr56 and His119. Residue His119 participates in substrate binding. Residues Gln187, Ser214, Leu216, Ser264, and Arg269 each contribute to the NADPH site.

It belongs to the aldo/keto reductase family. In terms of tissue distribution, latex secreting cells (laticifer cells). Expressed constitutively and ubiquitously with highest levels in capsules.

The protein localises to the cytoplasm. The protein resides in the cytosol. The catalysed reaction is codeine + NADP(+) = codeinone + NADPH + H(+). It catalyses the reaction neopine + NADP(+) = neopinone + NADPH + H(+). It carries out the reaction morphine + NADP(+) = morphinone + NADPH + H(+). The enzyme catalyses neomorphine + NADP(+) = neomorphinone + NADPH + H(+). The protein operates within alkaloid biosynthesis; morphine biosynthesis. Its function is as follows. NADPH-dependent codeinone reductase involved in biosynthesis of morphinan-type benzylisoquinoline and opiate alkaloids natural products. Reduces codeinone to codeine in the penultimate step in morphine biosynthesis. Can use morphinone, hydrocodone and hydromorphone as substrate during reductive reaction with NADPH as cofactor, and morphine and dihydrocodeine as substrate during oxidative reaction with NADP as cofactor. Converts morphinone to morphine, and neomorphinone to neomorphine. Reduces irreversibly neopinone, a spontaneous isomer of codeinone, to neopine; in planta, neopine levels are limited to low levels. This is NADPH-dependent codeinone reductase 1-5 from Papaver somniferum (Opium poppy).